The sequence spans 655 residues: MGIFSIANQHIRFAVKLATAIVLALFVGFHFQLETPRWAVLTAAIVAAGPAFAAGGEPYSGAIRYRGFLRIIGTFIGCIAGLVIIIAMIRAPLLMILVCCIWAGFCTWISSLVRIENSYAWGLAGYTALIIVITIQPEPLLTPQFAVERCSEIVIGIVCAIMADLLFSPRSIKQEVDRELESLLVAQYQLMQLCIKHGDGEVVDKAWGDLVRRTTALQGMRSNLNMESSRWARANRRLKAINTLSLTLITQSCETYLIQNTRPELITDTFREFFDTPVETAQDVHKQLKRLRRVIAWTGERETPVTIYSWVAAATRYQLLKRGVISNTKINATEEEILQGEPEVKVESAERHHAMVNFWRTTLSCILGTLFWLWTGWTSGSGAMVMIAVVTSLAMRLPNPRMVAIDFIYGTLAALPLGLLYFLVIIPNTQQSMLLLCISLAVLGFFLGIEVQKRRLGSMGALASTINIIVLDNPMTFHFNQFLDSALGQIVGCVLAFTVILLVRDKSRDRTGRVLLNQFVSAAVSAMTTNVARRKENHLPALYQQLFLLMNKFPGDLPKFRLALTMIIAHQRLRDAPIPVNEDLSAFHRQMRRTADHVISARSDDKRRRYFGQLLEELEIYQEKLRIWQAPPQVTEPVHRLTGMLHKYQHALTDS.

The next 11 helical transmembrane spans lie at 13–33 (FAVKLATAIVLALFVGFHFQL), 38–58 (WAVLTAAIVAAGPAFAAGGEP), 69–89 (LRIIGTFIGCIAGLVIIIAMI), 93–113 (LLMILVCCIWAGFCTWISSLV), 121–141 (WGLAGYTALIIVITIQPEPLL), 152–172 (EIVIGIVCAIMADLLFSPRSI), 370–390 (LFWLWTGWTSGSGAMVMIAVV), 407–427 (FIYGTLAALPLGLLYFLVIIP), 431–451 (QSMLLLCISLAVLGFFLGIEV), 459–479 (MGALASTINIIVLDNPMTFHF), and 482–502 (FLDSALGQIVGCVLAFTVILL).

Belongs to the aromatic acid exporter ArAE (TC 2.A.85) family.

The protein localises to the cell inner membrane. In terms of biological role, forms an efflux pump with AaeA. Could function as a metabolic relief valve, allowing to eliminate certain compounds when they accumulate to high levels in the cell. The polypeptide is p-hydroxybenzoic acid efflux pump subunit AaeB (Escherichia coli O7:K1 (strain IAI39 / ExPEC)).